A 51-amino-acid polypeptide reads, in one-letter code: DNA-directed RNA polymerases II, IV and V subunit 12 (51 aa).

The Zn(2+) site is built by Cys-12, Cys-15, Cys-29, and Cys-32.

This sequence belongs to the archaeal Rpo12/eukaryotic RPC10 RNA polymerase subunit family. As to quaternary structure, component of the RNA polymerase II, IV and V complexes. Associates with the mediator complex. Interacts with NRPD1.

It is found in the nucleus. DNA-dependent RNA polymerase catalyzes the transcription of DNA into RNA using the four ribonucleoside triphosphates as substrates. Component of RNA polymerase II which synthesizes mRNA precursors and many functional non-coding RNAs. Pol II is the central component of the basal RNA polymerase II transcription machinery. It is composed of mobile elements that move relative to each other. Component of RNA polymerases IV and V which mediate short-interfering RNAs (siRNA) accumulation and subsequent RNA-directed DNA methylation-dependent (RdDM) transcriptional gene silencing (TGS) of endogenous repeated sequences, including transposable elements. The polypeptide is DNA-directed RNA polymerases II, IV and V subunit 12 (NRPB12) (Arabidopsis thaliana (Mouse-ear cress)).